A 207-amino-acid chain; its full sequence is Guanylate kinase (207 aa).

In terms of domain architecture, Guanylate kinase-like spans 4–184 (GILFIISAPS…AVNDLITIIT (181 aa)). Position 11–18 (11–18 (APSGTGKS)) interacts with ATP.

This sequence belongs to the guanylate kinase family.

The protein resides in the cytoplasm. It catalyses the reaction GMP + ATP = GDP + ADP. Essential for recycling GMP and indirectly, cGMP. The polypeptide is Guanylate kinase (gmk) (Buchnera aphidicola subsp. Acyrthosiphon pisum (strain APS) (Acyrthosiphon pisum symbiotic bacterium)).